A 202-amino-acid chain; its full sequence is Large ribosomal subunit protein bL25 (202 aa).

The segment at 182 to 202 (EVEAEETEDDEAASEGEEAAE) is disordered. A compositionally biased stretch (acidic residues) spans 183-202 (VEAEETEDDEAASEGEEAAE).

Belongs to the bacterial ribosomal protein bL25 family. CTC subfamily. In terms of assembly, part of the 50S ribosomal subunit; part of the 5S rRNA/L5/L18/L25 subcomplex. Contacts the 5S rRNA. Binds to the 5S rRNA independently of L5 and L18.

Its function is as follows. This is one of the proteins that binds to the 5S RNA in the ribosome where it forms part of the central protuberance. In Corynebacterium glutamicum (strain R), this protein is Large ribosomal subunit protein bL25.